We begin with the raw amino-acid sequence, 77 residues long: Putative defensin-like protein 160 (77 aa).

A signal peptide spans Met-1–Cys-24. Cystine bridges form between Cys-30–Cys-77, Cys-40–Cys-59, Cys-45–Cys-71, and Cys-49–Cys-73.

The protein belongs to the DEFL family.

The protein resides in the secreted. In Arabidopsis thaliana (Mouse-ear cress), this protein is Putative defensin-like protein 160 (LCR26).